The primary structure comprises 684 residues: Transcriptional regulatory protein RCO1 (684 aa).

An N-acetylmethionine modification is found at methionine 1. Residues 1-48 (MDTSKKDTTRSPSHSNSSSPSSSSLSSSSSKEKKRPKRLSSQNVNYDL) are disordered. Low complexity predominate over residues 10 to 29 (RSPSHSNSSSPSSSSLSSSS). Serine 68 carries the post-translational modification Phosphoserine. The PHD-type 1 zinc-finger motif lies at 260–309 (EDFCSACNQSGSFLCCDTCPKSFHFLCLDPPIDPNNLPKGDWHCNECKFK). Residues 414-472 (FLICYKCNQTRLGSWSHPENSRLIMTCDYCQTPWHLDCVPRASFKNLGSKWKCPLHSPT) form a PHD-type 2; atypical zinc finger. Serine 683 bears the Phosphoserine mark.

Component of the RPD3C(S) complex composed of at least EAF3, RCO1, RPD3, SIN3, and UME1.

It is found in the nucleus. Functionally, catalytic component of the RPD3C(S) histone deacetylase complex responsible for the deacetylation of lysine residues on the N-terminal part of the core histones (H2A, H2B, H3 and H4). Histone deacetylation gives a tag for epigenetic repression and plays an important role in transcriptional regulation, cell cycle progression, DNA damage response, osmotic stress response and developmental events. This chain is Transcriptional regulatory protein RCO1 (RCO1), found in Saccharomyces cerevisiae (strain ATCC 204508 / S288c) (Baker's yeast).